The primary structure comprises 278 residues: Non-heme chloroperoxidase (278 aa).

The 236-residue stretch at 24–259 folds into the AB hydrolase-1 domain; the sequence is PIVFHHGWPL…LKTYPGYSHG (236 aa). Active-site residues include S97, D229, and H258.

The protein belongs to the AB hydrolase superfamily. Bacterial non-heme haloperoxidase / perhydrolase family. As to quaternary structure, homodimer.

Its function is as follows. Chlorinates and brominates suitable organic compounds. Involved in the biosynthesis of the antibiotic pyrrolnitrin. The sequence is that of Non-heme chloroperoxidase (cpo) from Burkholderia pyrrocinia (Pseudomonas pyrrocinia).